A 238-amino-acid polypeptide reads, in one-letter code: Ribonuclease PH (238 aa).

The segment at 66–88 (LPRSTHTRSDREAARGKQSGRTQ) is disordered. Residues Arg86 and 124–126 (GTR) each bind phosphate.

Belongs to the RNase PH family. In terms of assembly, homohexameric ring arranged as a trimer of dimers.

It carries out the reaction tRNA(n+1) + phosphate = tRNA(n) + a ribonucleoside 5'-diphosphate. Its function is as follows. Phosphorolytic 3'-5' exoribonuclease that plays an important role in tRNA 3'-end maturation. Removes nucleotide residues following the 3'-CCA terminus of tRNAs; can also add nucleotides to the ends of RNA molecules by using nucleoside diphosphates as substrates, but this may not be physiologically important. Probably plays a role in initiation of 16S rRNA degradation (leading to ribosome degradation) during starvation. This is Ribonuclease PH from Ralstonia pickettii (strain 12J).